Here is a 150-residue protein sequence, read N- to C-terminus: D-aminoacyl-tRNA deacylase (150 aa).

The Gly-cisPro motif, important for rejection of L-amino acids motif lies at Gly-136–Pro-137.

Belongs to the DTD family. As to quaternary structure, homodimer.

The protein resides in the cytoplasm. The catalysed reaction is glycyl-tRNA(Ala) + H2O = tRNA(Ala) + glycine + H(+). It carries out the reaction a D-aminoacyl-tRNA + H2O = a tRNA + a D-alpha-amino acid + H(+). Functionally, an aminoacyl-tRNA editing enzyme that deacylates mischarged D-aminoacyl-tRNAs. Also deacylates mischarged glycyl-tRNA(Ala), protecting cells against glycine mischarging by AlaRS. Acts via tRNA-based rather than protein-based catalysis; rejects L-amino acids rather than detecting D-amino acids in the active site. By recycling D-aminoacyl-tRNA to D-amino acids and free tRNA molecules, this enzyme counteracts the toxicity associated with the formation of D-aminoacyl-tRNA entities in vivo and helps enforce protein L-homochirality. The protein is D-aminoacyl-tRNA deacylase of Macrococcus caseolyticus (strain JCSC5402) (Macrococcoides caseolyticum).